The chain runs to 341 residues: Protein pelota homolog (341 aa).

Belongs to the eukaryotic release factor 1 family. Pelota subfamily. As to quaternary structure, monomer. A divalent metal cation serves as cofactor.

It localises to the cytoplasm. In terms of biological role, may function in recognizing stalled ribosomes, interact with stem-loop structures in stalled mRNA molecules, and effect endonucleolytic cleavage of the mRNA. May play a role in the release non-functional ribosomes and degradation of damaged mRNAs. Has endoribonuclease activity. This chain is Protein pelota homolog, found in Metallosphaera sedula (strain ATCC 51363 / DSM 5348 / JCM 9185 / NBRC 15509 / TH2).